The chain runs to 413 residues: Protein MANNAN SYNTHESIS-RELATED (413 aa).

The Cytoplasmic portion of the chain corresponds to 1-5 (MNSME). Residues 6 to 26 (IRQAFAGLLTLSMFIMLGNMI) traverse the membrane as a helical; Signal-anchor for type II membrane protein segment. Topologically, residues 27 to 413 (KKDHFDYPAE…KNHLAYKCFC (387 aa)) are lumenal. N-linked (GlcNAc...) asparagine glycosylation occurs at Asn-207. Substrate is bound at residue 255–257 (DLR).

It belongs to the glycosyltransferase GT106 family. As to expression, highly and specifically expressed in the endosperm.

It localises to the golgi apparatus membrane. Its pathway is glycan biosynthesis. In terms of biological role, glycosyltransferase involved in mannan biosynthesis. This Trigonella foenum-graecum (Fenugreek) protein is Protein MANNAN SYNTHESIS-RELATED.